Reading from the N-terminus, the 284-residue chain is D-tagatose-1,6-bisphosphate aldolase subunit GatY (284 aa).

The active-site Proton donor is Asp82. His83 and His180 together coordinate Zn(2+). Gly181 lines the dihydroxyacetone phosphate pocket. His208 is a Zn(2+) binding site. Dihydroxyacetone phosphate contacts are provided by residues 209 to 211 (GAS) and 230 to 233 (NVAT).

Belongs to the class II fructose-bisphosphate aldolase family. TagBP aldolase GatY subfamily. In terms of assembly, forms a complex with GatZ. Zn(2+) serves as cofactor.

The enzyme catalyses D-tagatofuranose 1,6-bisphosphate = D-glyceraldehyde 3-phosphate + dihydroxyacetone phosphate. The protein operates within carbohydrate metabolism; D-tagatose 6-phosphate degradation; D-glyceraldehyde 3-phosphate and glycerone phosphate from D-tagatose 6-phosphate: step 2/2. In terms of biological role, catalytic subunit of the tagatose-1,6-bisphosphate aldolase GatYZ, which catalyzes the reversible aldol condensation of dihydroxyacetone phosphate (DHAP or glycerone-phosphate) with glyceraldehyde 3-phosphate (G3P) to produce tagatose 1,6-bisphosphate (TBP). Requires GatZ subunit for full activity and stability. Is involved in the catabolism of galactitol. The chain is D-tagatose-1,6-bisphosphate aldolase subunit GatY from Escherichia coli O139:H28 (strain E24377A / ETEC).